Consider the following 83-residue polypeptide: Small ribosomal subunit protein bS16 (83 aa).

Belongs to the bacterial ribosomal protein bS16 family.

The sequence is that of Small ribosomal subunit protein bS16 from Shewanella halifaxensis (strain HAW-EB4).